The sequence spans 582 residues: 2-isopropylmalate synthase (582 aa).

Positions 40–314 constitute a Pyruvate carboxyltransferase domain; it reads PRWCAVDLRD…DPMIDFSDID (275 aa). Residues D49, H253, H255, and N289 each contribute to the Mg(2+) site. The interval 456-582 is regulatory domain; that stretch reads SPAGHPGGQW…NRAIRDNQVD (127 aa).

Belongs to the alpha-IPM synthase/homocitrate synthase family. LeuA type 2 subfamily. In terms of assembly, homodimer. It depends on Mg(2+) as a cofactor.

The protein localises to the cytoplasm. It catalyses the reaction 3-methyl-2-oxobutanoate + acetyl-CoA + H2O = (2S)-2-isopropylmalate + CoA + H(+). The protein operates within amino-acid biosynthesis; L-leucine biosynthesis; L-leucine from 3-methyl-2-oxobutanoate: step 1/4. Functionally, catalyzes the condensation of the acetyl group of acetyl-CoA with 3-methyl-2-oxobutanoate (2-ketoisovalerate) to form 3-carboxy-3-hydroxy-4-methylpentanoate (2-isopropylmalate). The polypeptide is 2-isopropylmalate synthase (Renibacterium salmoninarum (strain ATCC 33209 / DSM 20767 / JCM 11484 / NBRC 15589 / NCIMB 2235)).